A 383-amino-acid polypeptide reads, in one-letter code: Probable acyl-CoA dehydrogenase YdiO (383 aa).

The protein belongs to the acyl-CoA dehydrogenase family. It depends on FAD as a cofactor.

It carries out the reaction a 2,3-saturated acyl-CoA + A = a 2,3-dehydroacyl-CoA + AH2. The sequence is that of Probable acyl-CoA dehydrogenase YdiO (ydiO) from Escherichia coli O157:H7.